We begin with the raw amino-acid sequence, 203 residues long: ADP-ribosylation factor-like protein 6-interacting protein 1 (203 aa).

Topologically, residues 1–41 (MAEGDNRSSNLLAAETASLEEQLQGWGEVMLMADKVLRWER) are cytoplasmic. A helical transmembrane segment spans residues 42–62 (AWFPPAIMGVVSLVFLIIYYL). Over 63–65 (DPS) the chain is Lumenal. A helical transmembrane segment spans residues 66–86 (VLSGVSCFVMFLCLADYLVPI). Over 87–133 (LAPRIFGSNKWTTEQQQRFHEICSNLVKTRRRAVGWWKRLFTLKEEK) the chain is Cytoplasmic. Residues 134–175 (PKMYFMTMIVSLAAVAWVGQQVHNLLLTYLIVTSLLLLPGLN) form a helical membrane-spanning segment. Residues 176–203 (QHGIISKYIGMAKREINKLLKQKEKKNE) are Lumenal-facing.

The protein belongs to the ARL6ip family. In terms of assembly, homooligomer. Heterodimer with ARL6IP5. Interacts with ATL1, TMEM33 and ARL6.

The protein localises to the endomembrane system. Its subcellular location is the endoplasmic reticulum membrane. It localises to the endoplasmic reticulum. Positively regulates SLC1A1/EAAC1-mediated glutamate transport by increasing its affinity for glutamate in a PKC activity-dependent manner. Promotes the catalytic efficiency of SLC1A1/EAAC1 probably by reducing its interaction with ARL6IP5, a negative regulator of SLC1A1/EAAC1-mediated glutamate transport. Plays a role in the formation and stabilization of endoplasmic reticulum tubules. Negatively regulates apoptosis, possibly by modulating the activity of caspase-9 (CASP9). Inhibits cleavage of CASP9-dependent substrates and downstream markers of apoptosis but not CASP9 itself. May be involved in protein transport, membrane trafficking, or cell signaling during hematopoietic maturation. The sequence is that of ADP-ribosylation factor-like protein 6-interacting protein 1 (ARL6IP1) from Pongo abelii (Sumatran orangutan).